We begin with the raw amino-acid sequence, 815 residues long: Probable receptor-like protein kinase At2g39360 (815 aa).

The signal sequence occupies residues 1–26 (MINLKLFLELKLCFLITLLCSSHISS). At 27-407 (VSDTFFINCG…SSSNKSSNTS (381 aa)) the chain is on the extracellular side. Residues asparagine 40, asparagine 45, asparagine 125, asparagine 146, asparagine 209, asparagine 244, asparagine 277, asparagine 331, asparagine 355, asparagine 401, and asparagine 405 are each glycosylated (N-linked (GlcNAc...) asparagine). A helical membrane pass occupies residues 408-428 (VGLIAGLSAALCVALVFGVVV). The Cytoplasmic portion of the chain corresponds to 429–815 (SWWCIRKRRR…FAQMVREETR (387 aa)). The region spanning 487-761 (FDESLVIGVG…GDLLWNLEFM (275 aa)) is the Protein kinase domain. Residues 493–501 (IGVGGFGKV) and lysine 515 contribute to the ATP site. Aspartate 612 (proton acceptor) is an active-site residue.

Belongs to the protein kinase superfamily. Ser/Thr protein kinase family.

Its subcellular location is the cell membrane. The chain is Probable receptor-like protein kinase At2g39360 from Arabidopsis thaliana (Mouse-ear cress).